A 150-amino-acid polypeptide reads, in one-letter code: Ribosome maturation factor RimP (150 aa).

The protein belongs to the RimP family.

It is found in the cytoplasm. Functionally, required for maturation of 30S ribosomal subunits. The chain is Ribosome maturation factor RimP from Acaryochloris marina (strain MBIC 11017).